Consider the following 591-residue polypeptide: MGFNIPWNGTQAEYHVTHCFLPSDKIDLISFSTSTSQFCNGRPFKFVPAALPSILPQAKPITTDQTQAPPPALAQPSLSFTQGLLVGQLSVVLLIGAFIKFFIFGEAPPPPSRSGLYNRTSSHRRSYSINAISTDFSPRTLREKPSTSNILRPVPSSSTNTRSILRKTYYSATPTNPTSKHGRSRVHHSSHQPESLDWFNVLIAQTIAQYRQTAYILKDSPTSSILASLSEALNNPEKKPSFIDTIKVTDISLGEEFPIFSNCRVIAVEDPNSDGGRLQALMDVDLSDDNLSLAVETSLLLNYPKPFSAVLPVALAVSVVRFSGTLCISFVPGPGTSDQTMGPSASPPNQSTSTETASINDQTSEGQSTQRHTFHQHKPTNSTPTAATADDAHTKHAHGIPKTSLAFSFLPDYRLDLSVRSLIGSRSRLQDVPKVAQLVEARMQAWFEERVVEPRVQVVGLPNIWPRMGRTGVRGSQEEAEARAGVGSVPVDIPGTAGGDGMRGRGGGGGGGGLRGNSSGRGMGYDGLRYRPNAHGDGGTGVVQGQGAGGIFCEAGPQNQNRGGDDGEGPGRRSDERFAMPGSMPDSVAVT.

Over 1–83 (MGFNIPWNGT…AQPSLSFTQG (83 aa)) the chain is Lumenal. The chain crosses the membrane as a helical span at residues 84-104 (LLVGQLSVVLLIGAFIKFFIF). Topologically, residues 105–591 (GEAPPPPSRS…GSMPDSVAVT (487 aa)) are cytoplasmic. Disordered regions lie at residues 138–159 (PRTLREKPSTSNILRPVPSSST), 170–189 (YSATPTNPTSKHGRSRVHHS), 334–398 (PGTS…KHAH), and 479–591 (EAEA…VAVT). Composition is skewed to polar residues over residues 146–159 (STSNILRPVPSSST) and 170–179 (YSATPTNPTS). Positions 180–189 (KHGRSRVHHS) are enriched in basic residues. Residues 192 to 462 (QPESLDWFNV…EPRVQVVGLP (271 aa)) enclose the SMP-LTD domain. The segment covering 336–371 (TSDQTMGPSASPPNQSTSTETASINDQTSEGQSTQR) has biased composition (polar residues). Residues 379–389 (PTNSTPTAATA) are compositionally biased toward low complexity. Gly residues-rich tracts occupy residues 496–525 (TAGGDGMRGRGGGGGGGGLRGNSSGRGMGY) and 536–550 (GDGGTGVVQGQGAGG). Residues 563–578 (GGDDGEGPGRRSDERF) are compositionally biased toward basic and acidic residues.

It belongs to the MMM1 family. As to quaternary structure, homodimer. Component of the ER-mitochondria encounter structure (ERMES) or MDM complex, composed of MMM1, MDM10, MDM12 and MDM34. An MMM1 homodimer associates with one molecule of MDM12 on each side in a pairwise head-to-tail manner, and the SMP-LTD domains of MMM1 and MDM12 generate a continuous hydrophobic tunnel for phospholipid trafficking.

It is found in the endoplasmic reticulum membrane. Its function is as follows. Component of the ERMES/MDM complex, which serves as a molecular tether to connect the endoplasmic reticulum (ER) and mitochondria. Components of this complex are involved in the control of mitochondrial shape and protein biogenesis, and function in nonvesicular lipid trafficking between the ER and mitochondria. The MDM12-MMM1 subcomplex functions in the major beta-barrel assembly pathway that is responsible for biogenesis of all outer membrane beta-barrel proteins, and acts in a late step after the SAM complex. The MDM10-MDM12-MMM1 subcomplex further acts in the TOM40-specific pathway after the action of the MDM12-MMM1 complex. Essential for establishing and maintaining the structure of mitochondria and maintenance of mtDNA nucleoids. This Ajellomyces capsulatus (strain G186AR / H82 / ATCC MYA-2454 / RMSCC 2432) (Darling's disease fungus) protein is Maintenance of mitochondrial morphology protein 1.